A 214-amino-acid chain; its full sequence is cAMP-activated global transcriptional regulator Vfr (214 aa).

3',5'-cyclic AMP-binding positions include 59-60 (RE), 73-75 (GEL), 87-88 (RS), 132-133 (TT), Arg179, and Arg185. Positions 142-214 (LDVTGRVART…GKTMVVFGTR (73 aa)) constitute an HTH crp-type domain. The H-T-H motif DNA-binding region spans 174-193 (RQEIGRIVGCSREMVGRVLK).

As to quaternary structure, homodimer.

Its function is as follows. Global cAMP-dependent transcriptional regulator that controls virulence gene expression by distinct cAMP-dependent and -independent mechanisms, which allow to fine tune its virulence program in response to specific host cues or environments. Controls the expression of many regulatory targets including type II, type III and type IV secretion systems, flagellar-mediated motility, and quorum sensing systems. Transcriptional control is exerted by binding to a well-characterized consensus site (5'-ANWWTGNGAWNYAGWTCACAT) within target promoters. Directly binds to the toxA upstream region to regulate exotoxin A production, to the lasR gene promoter to activate the las quorum-sensing system or to the exsA promoter to regulate type III secretion system. Autoregulates as well its own expression. This Pseudomonas aeruginosa (strain ATCC 15692 / DSM 22644 / CIP 104116 / JCM 14847 / LMG 12228 / 1C / PRS 101 / PAO1) protein is cAMP-activated global transcriptional regulator Vfr (vfr).